The following is a 230-amino-acid chain: Claudin-2 (230 aa).

Residues 1-7 (MASLGVQ) lie on the Cytoplasmic side of the membrane. Residues 8–28 (LVGYILGLLGLLGTSIAMLLP) traverse the membrane as a helical segment. At 29 to 81 (NWRTSSYVGASIVTAVGFSKGLWMECATHSTGITQCDIYSTLLGLPADIQAAQ) the chain is on the extracellular side. A disulfide bond links C54 and C64. The chain crosses the membrane as a helical span at residues 82-102 (AMMVTSSAMSSLACIISVVGM). The Cytoplasmic portion of the chain corresponds to 103 to 116 (RCTVFCQDSRAKDR). A helical transmembrane segment spans residues 117–137 (VAVVGGVFFILGGILGFIPVA). At 138-162 (WNLHGILRDFYSPLVPDSMKFEIGE) the chain is on the extracellular side. A helical transmembrane segment spans residues 163–183 (ALYLGIISALFSLVAGVILCF). Residues 184-230 (SCSPQGNRTNYYDGYQAQPLATRSSPRSAQQPKAKSEFNSYSLTGYV) are Cytoplasmic-facing. Residues 205-230 (TRSSPRSAQQPKAKSEFNSYSLTGYV) are disordered. A Glycyl lysine isopeptide (Lys-Gly) (interchain with G-Cter in SUMO) cross-link involves residue K218. Phosphoserine is present on residues S219 and S223. The interval 229 to 230 (YV) is interactions with TJP1, TJP2 and TJP3.

It belongs to the claudin family. As to quaternary structure, can form homo- and heteropolymers with other claudins to mediate paracellular barrier and channel functions of tight junctions in response to physiological stimuli. Homopolymers interact with CLDN3, but not CLDN1, homopolymers. Directly interacts with TJP1/ZO-1, TJP2/ZO-2 and TJP3/ZO-3. Post-translationally, the disulfide bond is necessary for pore formation, but is not required for correct protein trafficking. In terms of tissue distribution, expressed in the kidney, liver and intestine, with higher levels in the ileum than in the jejunum. Low levels in the brain. Expressed in colonic epithelium (at protein level). Expressed in the perivenous regions, bile ducts, and gallbladder epithelium (at protein level).

Its subcellular location is the cell junction. It localises to the tight junction. The protein localises to the cell membrane. It catalyses the reaction Na(+)(in) = Na(+)(out). The catalysed reaction is K(+)(in) = K(+)(out). It carries out the reaction Rb(+)(in) = Rb(+)(out). The enzyme catalyses Li(+)(in) = Li(+)(out). It catalyses the reaction Cs(+)(in) = Cs(+)(out). The catalysed reaction is Ca(2+)(in) = Ca(2+)(out). It carries out the reaction methylamine(out) = methylamine(in). The enzyme catalyses choline(out) = choline(in). It catalyses the reaction H2O(in) = H2O(out). The channel permeability is down-regulated at acidic pH. Its function is as follows. Forms paracellular channels: polymerizes in tight junction strands with cation- and water-selective channels through the strands, conveying epithelial permeability in a process known as paracellular tight junction permeability. In intestinal epithelium, allows for sodium and water fluxes from the peritoneal side to the lumen of the intestine to regulate nutrient absorption and clear enteric pathogens as part of mucosal immune response. In kidney, allows passive sodium and calcium reabsorption across proximal tubules from the lumen back to the bloodstream. In the hepatobiliary tract, allows paracellular water and cation fluxes in the hepatic perivenous areas and biliary epithelium to generate bile flow and maintain osmotic gradients. This is Claudin-2 from Mus musculus (Mouse).